A 413-amino-acid polypeptide reads, in one-letter code: Serine hydroxymethyltransferase (413 aa).

Residues L116 and 120-122 (GHL) contribute to the (6S)-5,6,7,8-tetrahydrofolate site. Position 225 is an N6-(pyridoxal phosphate)lysine (K225). 349-351 (SPF) lines the (6S)-5,6,7,8-tetrahydrofolate pocket.

This sequence belongs to the SHMT family. As to quaternary structure, homodimer. Pyridoxal 5'-phosphate is required as a cofactor.

It is found in the cytoplasm. The enzyme catalyses (6R)-5,10-methylene-5,6,7,8-tetrahydrofolate + glycine + H2O = (6S)-5,6,7,8-tetrahydrofolate + L-serine. Its pathway is one-carbon metabolism; tetrahydrofolate interconversion. The protein operates within amino-acid biosynthesis; glycine biosynthesis; glycine from L-serine: step 1/1. Functionally, catalyzes the reversible interconversion of serine and glycine with tetrahydrofolate (THF) serving as the one-carbon carrier. This reaction serves as the major source of one-carbon groups required for the biosynthesis of purines, thymidylate, methionine, and other important biomolecules. Also exhibits THF-independent aldolase activity toward beta-hydroxyamino acids, producing glycine and aldehydes, via a retro-aldol mechanism. This is Serine hydroxymethyltransferase from Levilactobacillus brevis (strain ATCC 367 / BCRC 12310 / CIP 105137 / JCM 1170 / LMG 11437 / NCIMB 947 / NCTC 947) (Lactobacillus brevis).